The primary structure comprises 720 residues: MNLLKHIFLEDDYDAYEGTLDPASFFRINKQEEIIASTVCEIGWEYSKSFGNAYICTSFLCFHSDDFKTRFTFPLAAVRKLERENSDNDTFTFDLSNFHSQIIHLRFKGTRQQSEFFCDRLVRQLHASLEDASSVGLFLLSLASERVCFSESANSQEIESIDLGLGSQFGYPIASSNTNGLINENNSKSWIQYLKKNGANFNLIQTPNFQKLVQSGIPNNLRADIWETCSGSLFPRWKSKGFYAKNIDSVINNRCEYSEEIEKDLTRSLPDYPAYQSPTGINTLRRILLFYSETNKEVGYCQAMNIVLAALLVYCTEEQAYFLFSQLCEFYIPGYYAKIIHGLLLDLTVFEYVLEHTLPHLYQKIIELDMDLKLITINWFFSLFIKDFRLDYAFRILDCLFVNGPRVLFQVALALFKVNAQGILNATDDSSVMKVFRQCFDHINQGTAADEKMAALGSRSSMCTLPQLFAVAFEYFDFITDSFVSAKRKEFKSSVLYSLRCFTKRSHLRSVYQTTLLSNTDLDLVYDAFINAIGENNICHGDVLEQKIDFNGFERLVDCAAPPLSVIREPLHYQRSKRKLFTRLYIWMKDGDSTETSLTFKRIIHGLERLKADIALHSEILCFQLYDLKRDGTLRTEEVVELSESLILLCCYEGDEKDEERLTVISEFLKSCFSGCQDRRSFQITMEDFQAIVDTTGLHATLEFFLKKLIDGLLGKLNAS.

The 66-residue stretch at 20–85 folds into the GRAM domain; it reads LDPASFFRIN…AAVRKLEREN (66 aa). A Rab-GAP TBC domain is found at 216-404; it reads GIPNNLRADI…RILDCLFVNG (189 aa).

It localises to the cytoplasm. The protein localises to the nucleus. Functionally, stimulates specifically the GTPase activity of ypt2 and ryh1. Inactivates ryh1 during recycling between the endosome and the Golgi compartments. This chain is GTPase-activating protein gyp2, found in Schizosaccharomyces pombe (strain 972 / ATCC 24843) (Fission yeast).